A 56-amino-acid polypeptide reads, in one-letter code: Large ribosomal subunit protein bL32 (56 aa).

A compositionally biased stretch (basic residues) spans 1 to 20 (MAVPKKKKSKSKRNHRHAVW). Residues 1–21 (MAVPKKKKSKSKRNHRHAVWK) form a disordered region.

This sequence belongs to the bacterial ribosomal protein bL32 family.

The protein is Large ribosomal subunit protein bL32 of Prochlorococcus marinus (strain MIT 9312).